The sequence spans 606 residues: Serine/threonine-protein kinase A-Raf (606 aa).

The RBD domain occupies 19-91 (GTVKVYLPNK…DGEELIVEVL (73 aa)). The segment at 98 to 144 (MHNFVRKTFFSLAFCDFCLKFLFHGFRCQTCGYKFHQHCSSKVPTVC) adopts a Phorbol-ester/DAG-type zinc-finger fold. The Zn(2+) site is built by histidine 99, cysteine 112, cysteine 115, cysteine 125, cysteine 128, histidine 133, cysteine 136, and cysteine 144. Residues serine 157 and serine 162 each carry the phosphoserine modification. Residues 160–207 (DLSGGSRQHEAPSNRPLNELLTPQGPSPRTQHCDPEHFPFPAPANAPL) are disordered. Position 181 is a phosphothreonine (threonine 181). Serine 186 and serine 214 each carry phosphoserine. The tract at residues 240–290 (STDAAGSRGGSDGTPRGSPSPASVSSGRKSPHSKSPAEQRERKSLADDKKK) is disordered. The residue at position 253 (threonine 253) is a Phosphothreonine. 2 positions are modified to phosphoserine: serine 257 and serine 269. The span at 274-289 (SPAEQRERKSLADDKK) shows a compositional bias: basic and acidic residues. Residues 310 to 570 (VQLLKRIGTG…PQILATIELL (261 aa)) enclose the Protein kinase domain. ATP contacts are provided by residues 316-324 (IGTGSFGTV) and lysine 336. Residue threonine 318 is modified to Phosphothreonine. The Proton acceptor role is filled by aspartate 429.

This sequence belongs to the protein kinase superfamily. TKL Ser/Thr protein kinase family. RAF subfamily. Interacts with TH1L/NELFD. The cofactor is Zn(2+). In terms of processing, dephosphorylation of Ser-214 by the SHOC2-MRAS-PP1c (SMP) complex consisting of SHOC2, GTP-bound M-Ras/MRAS and the catalytic subunit of protein phosphatase 1 (PPP1CA, PPP1CB or PPP1CC); this relieves inactivation and stimulates kinase activity. In terms of tissue distribution, predominantly in urogenital tissues.

It carries out the reaction L-seryl-[protein] + ATP = O-phospho-L-seryl-[protein] + ADP + H(+). The enzyme catalyses L-threonyl-[protein] + ATP = O-phospho-L-threonyl-[protein] + ADP + H(+). Functionally, involved in the transduction of mitogenic signals from the cell membrane to the nucleus. May also regulate the TOR signaling cascade. Phosphorylates PFKFB2. Its function is as follows. Serves as a positive regulator of myogenic differentiation by inducing cell cycle arrest, the expression of myogenin and other muscle-specific proteins, and myotube formation. This Homo sapiens (Human) protein is Serine/threonine-protein kinase A-Raf (ARAF).